Consider the following 270-residue polypeptide: Methylthioribulose-1-phosphate dehydratase (270 aa).

C122 contacts substrate. Positions 140 and 142 each coordinate Zn(2+). E165 serves as the catalytic Proton donor/acceptor. Zn(2+) is bound at residue H230.

The protein belongs to the aldolase class II family. MtnB subfamily. Zn(2+) is required as a cofactor.

The protein localises to the cytoplasm. The enzyme catalyses 5-(methylsulfanyl)-D-ribulose 1-phosphate = 5-methylsulfanyl-2,3-dioxopentyl phosphate + H2O. It participates in amino-acid biosynthesis; L-methionine biosynthesis via salvage pathway; L-methionine from S-methyl-5-thio-alpha-D-ribose 1-phosphate: step 2/6. Its function is as follows. Catalyzes the dehydration of methylthioribulose-1-phosphate (MTRu-1-P) into 2,3-diketo-5-methylthiopentyl-1-phosphate (DK-MTP-1-P). This is Methylthioribulose-1-phosphate dehydratase from Candida albicans (strain SC5314 / ATCC MYA-2876) (Yeast).